The following is a 1249-amino-acid chain: Protein transport protein Sec31A (1249 aa).

WD repeat units lie at residues 4 to 47 (KEID…EIFE), 64 to 111 (SSSH…AGDK), 120 to 160 (KHTG…TPMT), 166 to 206 (QPPE…PIIK), 209 to 254 (DHSN…SPLR), 258 to 298 (NHAR…VLYE), and 301 to 342 (TNTQ…DGLR). Residues 161 to 470 (PGAKTQPPED…IDASQTDFEK (310 aa)) form an interaction with SEC13 region. A WD 8; interaction with SEC13 repeat occupies 397–429 (SFSFGGKLVTFENVTGQPQQGAEQPRRQPVFIS). Arg-423 carries the post-translational modification Asymmetric dimethylarginine. Phosphoserine occurs at positions 526 and 531. Residue Lys-647 forms a Glycyl lysine isopeptide (Lys-Gly) (interchain with G-Cter in ubiquitin) linkage. 3 disordered regions span residues 790–829 (QGRSVPGQESSRSSYEGQPLPKGGPGPLAGHPQVSRVQSQ), 842–940 (TTWS…RYPN), and 954–1123 (PHMY…PIGN). The segment covering 796–805 (GQESSRSSYE) has biased composition (polar residues). Ser-799 carries the post-translational modification Phosphoserine. The interval 800–1142 (SRSSYEGQPL…TEKITKKPIP (343 aa)) is interaction with PDCD6. The ALG-2-binding site motif-2 (ABS-2) signature appears at 873 to 879 (GFIMHGN). Over residues 898–908 (QPPPYPQPQPY) the composition is skewed to pro residues. Low complexity-rich tracts occupy residues 961–970 (PASSPTSSSA) and 991–1007 (PSSSAYALPPGTTGTPP). Positions 1013–1024 (PASQRTGPQNGW) are enriched in polar residues. Over residues 1056–1074 (PGGDPQPQGLQQQPSASGP) the composition is skewed to low complexity. A Phosphothreonine modification is found at Thr-1190. At Ser-1192 the chain carries Phosphoserine. A Glycyl lysine isopeptide (Lys-Gly) (interchain with G-Cter in ubiquitin) cross-link involves residue Lys-1246.

The protein belongs to the WD repeat SEC31 family. In terms of assembly, COPII is composed of at least 5 proteins: the SEC23/24 complex, the SEC13/31 complex and SAR1. SEC13 and SEC31 make a 2:2 tetramer that forms the edge element of the COPII outer coat. The tetramer self-assembles in multiple copies to form the complete polyhedral cage. Interacts (via WD 8) with SEC13. Interacts with PDCD6; interaction takes place in response to cytosolic calcium increase and leads to bridge together the BCR(KLHL12) complex and SEC31A, leading to monoubiquitination. Interacts with KLHL12. In terms of processing, monoubiquitinated by the BCR(KLHL12) E3 ubiquitin ligase complex, leading to regulate the size of COPII coats. As to expression, ubiquitously expressed.

Its subcellular location is the cytoplasm. The protein resides in the cytoplasmic vesicle. It is found in the COPII-coated vesicle membrane. The protein localises to the endoplasmic reticulum membrane. Component of the coat protein complex II (COPII) which promotes the formation of transport vesicles from the endoplasmic reticulum (ER). The coat has two main functions, the physical deformation of the endoplasmic reticulum membrane into vesicles and the selection of cargo molecules. The sequence is that of Protein transport protein Sec31A (Sec31a) from Rattus norvegicus (Rat).